The primary structure comprises 97 residues: Aspartyl/glutamyl-tRNA(Asn/Gln) amidotransferase subunit C (97 aa).

The protein belongs to the GatC family. As to quaternary structure, heterotrimer of A, B and C subunits.

The enzyme catalyses L-glutamyl-tRNA(Gln) + L-glutamine + ATP + H2O = L-glutaminyl-tRNA(Gln) + L-glutamate + ADP + phosphate + H(+). It carries out the reaction L-aspartyl-tRNA(Asn) + L-glutamine + ATP + H2O = L-asparaginyl-tRNA(Asn) + L-glutamate + ADP + phosphate + 2 H(+). In terms of biological role, allows the formation of correctly charged Asn-tRNA(Asn) or Gln-tRNA(Gln) through the transamidation of misacylated Asp-tRNA(Asn) or Glu-tRNA(Gln) in organisms which lack either or both of asparaginyl-tRNA or glutaminyl-tRNA synthetases. The reaction takes place in the presence of glutamine and ATP through an activated phospho-Asp-tRNA(Asn) or phospho-Glu-tRNA(Gln). The sequence is that of Aspartyl/glutamyl-tRNA(Asn/Gln) amidotransferase subunit C from Prochlorococcus marinus (strain MIT 9211).